The chain runs to 310 residues: Ribosomal RNA small subunit methyltransferase H (310 aa).

Residues 32-34 (GGH), Asp52, Ala83, Asp100, and Gln107 each bind S-adenosyl-L-methionine.

The protein belongs to the methyltransferase superfamily. RsmH family.

The protein resides in the cytoplasm. The enzyme catalyses cytidine(1402) in 16S rRNA + S-adenosyl-L-methionine = N(4)-methylcytidine(1402) in 16S rRNA + S-adenosyl-L-homocysteine + H(+). In terms of biological role, specifically methylates the N4 position of cytidine in position 1402 (C1402) of 16S rRNA. This is Ribosomal RNA small subunit methyltransferase H from Geobacillus sp. (strain WCH70).